The sequence spans 209 residues: Outer-membrane lipoprotein LolB (209 aa).

An N-terminal signal peptide occupies residues 1 to 21; it reads MNNMKTFKFLTALFATAILTA. Residue cysteine 22 is the site of N-palmitoyl cysteine attachment. A lipid anchor (S-diacylglycerol cysteine) is attached at cysteine 22.

The protein belongs to the LolB family. As to quaternary structure, monomer.

Its subcellular location is the cell outer membrane. In terms of biological role, plays a critical role in the incorporation of lipoproteins in the outer membrane after they are released by the LolA protein. The sequence is that of Outer-membrane lipoprotein LolB from Haemophilus influenzae (strain 86-028NP).